We begin with the raw amino-acid sequence, 280 residues long: Manganese transport system membrane protein MntC (280 aa).

9 helical membrane-spanning segments follow: residues 16–36, 41–61, 62–82, 92–112, 137–157, 168–188, 193–213, 221–241, and 244–264; these read ALITSVTVGIVSGVIGSFIIL, LMGDAISHAVLPGVAISYMMG, MNFFIGAATFGIAAALGIGFV, TAIGIVFSAFFALGIILISFA, TIIIAIIVISLVALFYKEFLV, YGLNVKFLHYFLMLLLTLVTV, TVGIILVVAMLITPAATAYLL, IVLASTFGAVSAIIGLYFSYI, and LASGAAMVLVATIIFFIAFLF.

This sequence belongs to the ABC-3 integral membrane protein family.

It is found in the cell membrane. Its function is as follows. This protein is probably a component of a manganese permease, a binding protein-dependent, ATP-driven transport system. This Listeria monocytogenes serovar 1/2a (strain ATCC BAA-679 / EGD-e) protein is Manganese transport system membrane protein MntC (mntC).